A 435-amino-acid chain; its full sequence is 3-phosphoshikimate 1-carboxyvinyltransferase (435 aa).

3-phosphoshikimate is bound by residues lysine 15, serine 16, and arginine 20. Residue lysine 15 participates in phosphoenolpyruvate binding. Positions 96 and 124 each coordinate phosphoenolpyruvate. 5 residues coordinate 3-phosphoshikimate: serine 169, glutamine 171, serine 195, aspartate 319, and lysine 346. Glutamine 171 provides a ligand contact to phosphoenolpyruvate. Aspartate 319 acts as the Proton acceptor in catalysis. Residues arginine 350 and arginine 395 each coordinate phosphoenolpyruvate.

It belongs to the EPSP synthase family. Monomer.

The protein localises to the cytoplasm. The enzyme catalyses 3-phosphoshikimate + phosphoenolpyruvate = 5-O-(1-carboxyvinyl)-3-phosphoshikimate + phosphate. It functions in the pathway metabolic intermediate biosynthesis; chorismate biosynthesis; chorismate from D-erythrose 4-phosphate and phosphoenolpyruvate: step 6/7. In terms of biological role, catalyzes the transfer of the enolpyruvyl moiety of phosphoenolpyruvate (PEP) to the 5-hydroxyl of shikimate-3-phosphate (S3P) to produce enolpyruvyl shikimate-3-phosphate and inorganic phosphate. This is 3-phosphoshikimate 1-carboxyvinyltransferase from Chlorobium phaeobacteroides (strain BS1).